The sequence spans 96 residues: Co-chaperonin GroES (96 aa).

The protein belongs to the GroES chaperonin family. In terms of assembly, heptamer of 7 subunits arranged in a ring. Interacts with the chaperonin GroEL.

The protein resides in the cytoplasm. Its function is as follows. Together with the chaperonin GroEL, plays an essential role in assisting protein folding. The GroEL-GroES system forms a nano-cage that allows encapsulation of the non-native substrate proteins and provides a physical environment optimized to promote and accelerate protein folding. GroES binds to the apical surface of the GroEL ring, thereby capping the opening of the GroEL channel. The sequence is that of Co-chaperonin GroES from Histophilus somni (strain 129Pt) (Haemophilus somnus).